The primary structure comprises 179 residues: Ribosome maturation factor RimM (179 aa).

Residues 102–175 enclose the PRC barrel domain; sequence VEMWWDRDLV…RIVVDPPPGL (74 aa).

Belongs to the RimM family. In terms of assembly, binds ribosomal protein uS19.

Its subcellular location is the cytoplasm. Functionally, an accessory protein needed during the final step in the assembly of 30S ribosomal subunit, possibly for assembly of the head region. Essential for efficient processing of 16S rRNA. May be needed both before and after RbfA during the maturation of 16S rRNA. It has affinity for free ribosomal 30S subunits but not for 70S ribosomes. This is Ribosome maturation factor RimM from Frankia casuarinae (strain DSM 45818 / CECT 9043 / HFP020203 / CcI3).